Consider the following 265-residue polypeptide: uncharacterized protein (265 aa).

A thiamine diphosphate-binding site is contributed by Glu-47. Residues 204 to 247 (QHQMWLVQHILRVARHCGFTVTTMEMTLIETQVRLKITVKSDRT) are thiamine pyrophosphate binding.

It belongs to the TPP enzyme family. Requires Mg(2+) as cofactor. Thiamine diphosphate is required as a cofactor.

Functionally, truncated acetolactase synthase; no longer catalytically active. This is an uncharacterized protein from Haemophilus influenzae (strain ATCC 51907 / DSM 11121 / KW20 / Rd).